The sequence spans 577 residues: MAVSERRGLSGESPAQCRWEYLSLLVLMLSGCSGRIHRLTLTGEKRADIQLNSFGFYTNGSLEVELSLLRLSLQETEDKFPKVGFSLSRVRSGSVRSYSSRNSHECPLERNSSNFLVLFLINIKDLQVQVRKYGEQKLFISPGLLPEAPSQSGPPKPDPTGTPKDNHVIHPSPKKMSAVKEDQAKLTVPQVSGDKALPAGHRHSSDGQPQSQPPTRGPSGKEKDLVLGLGHLNDSYNFSFHIVIGSRAEEGQYSLNFHNCYNTIPGQEQPFDLTVMIREKNPEGFLSAAEIPLFKLYLIMSACFLAAGIFWVSVLCKNTYSVFKIHWLMAALAFTKSVSLLFHSINYYFINSQGHPIEGLAVMHYITHLLKGALLFITIALIGSGWAFVKYMLSDKEKKIFGIVIPLQVLANVAYIVIESREEGASDYGLWKEILFLVDLICCGAILFPVVWSIRHLQDASGTDGKVAVNLAKLKLFRHYYVMVICYIYFTRIIAILLRVAVPFQWQWLYQLLVESSTLAFFVLTGYKFQPAGDNPYLQLPQQEDEEDVQMEQVMTDSGFREGLSKVNKTASGRELL.

An N-terminal signal peptide occupies residues 1 to 34 (MAVSERRGLSGESPAQCRWEYLSLLVLMLSGCSG). N59 and N111 each carry an N-linked (GlcNAc...) asparagine glycan. The interval 144 to 224 (LLPEAPSQSG…TRGPSGKEKD (81 aa)) is disordered. Residues N233 and N237 are each glycosylated (N-linked (GlcNAc...) asparagine). 7 helical membrane-spanning segments follow: residues 296–316 (LYLI…SVLC), 325–345 (IHWL…FHSI), 369–389 (LLKG…WAFV), 400–420 (IFGI…VIES), 434–454 (ILFL…VWSI), 482–502 (VMVI…RVAV), and 506–526 (WQWL…VLTG).

Belongs to the LU7TM family.

The protein localises to the golgi apparatus. It is found in the cis-Golgi network membrane. It localises to the trans-Golgi network membrane. Its subcellular location is the golgi apparatus membrane. In terms of biological role, may play a role in intracellular immune modulation by activating NF-kappaB response and attenuating Toll-like-receptor response. This is Protein GPR108 (Gpr108) from Rattus norvegicus (Rat).